The chain runs to 146 residues: Catabolic 3-dehydroquinase (146 aa).

The Proton acceptor role is filled by Tyr24. Substrate is bound by residues Asn78, His84, and Asp91. His104 (proton donor) is an active-site residue. Substrate is bound by residues 105-106 and Arg115; that span reads IT.

Belongs to the type-II 3-dehydroquinase family. Homododecamer. Adopts a ring-like structure, composed of an arrangement of two hexameric rings stacked on top of one another.

It catalyses the reaction 3-dehydroquinate = 3-dehydroshikimate + H2O. Its pathway is aromatic compound metabolism; 3,4-dihydroxybenzoate biosynthesis; 3,4-dihydroxybenzoate from 3-dehydroquinate: step 1/2. In terms of biological role, is involved in the catabolism of quinate. Allows the utilization of quinate as carbon source via the beta-ketoadipate pathway. The chain is Catabolic 3-dehydroquinase from Meyerozyma guilliermondii (strain ATCC 6260 / CBS 566 / DSM 6381 / JCM 1539 / NBRC 10279 / NRRL Y-324) (Yeast).